The primary structure comprises 136 residues: Gilles de la Tourette syndrome chromosomal region candidate gene 1 protein (136 aa).

The helical transmembrane segment at 73–93 (AICMEVFLFLWFIAPIYACVC) threads the bilayer.

It localises to the membrane. The polypeptide is Gilles de la Tourette syndrome chromosomal region candidate gene 1 protein (GTSCR1) (Homo sapiens (Human)).